The sequence spans 177 residues: Transcription antitermination protein NusB (177 aa).

The interval 1–35 is disordered; sequence MTDSANPTPSARPPRQPRTGTTGTGARKAGSKSGR. Residues 17-28 are compositionally biased toward low complexity; it reads PRTGTTGTGARK.

This sequence belongs to the NusB family.

In terms of biological role, involved in transcription antitermination. Required for transcription of ribosomal RNA (rRNA) genes. Binds specifically to the boxA antiterminator sequence of the ribosomal RNA (rrn) operons. This Acidovorax ebreus (strain TPSY) (Diaphorobacter sp. (strain TPSY)) protein is Transcription antitermination protein NusB.